Consider the following 215-residue polypeptide: Large ribosomal subunit protein bL25 (215 aa).

Residues 1–10 are compositionally biased toward polar residues; that stretch reads MAKSASNQLR. Disordered stretches follow at residues 1-25 and 187-215; these read MAKSASNQLRVTVRTETGKGASRRA and ELEGEVAGAEEAEEAAVEAGEAEAAGESE.

Belongs to the bacterial ribosomal protein bL25 family. CTC subfamily. As to quaternary structure, part of the 50S ribosomal subunit; part of the 5S rRNA/L5/L18/L25 subcomplex. Contacts the 5S rRNA. Binds to the 5S rRNA independently of L5 and L18.

Its function is as follows. This is one of the proteins that binds to the 5S RNA in the ribosome where it forms part of the central protuberance. The sequence is that of Large ribosomal subunit protein bL25 from Mycobacterium bovis (strain ATCC BAA-935 / AF2122/97).